The sequence spans 229 residues: Trypsin (229 aa).

The propeptide at 1–7 (APDDDDK) is activation peptide. In terms of domain architecture, Peptidase S1 spans 8–227 (IVGGYECPKH…YVSWIHETIA (220 aa)). Intrachain disulfides connect Cys14–Cys143, Cys32–Cys48, Cys116–Cys216, Cys123–Cys189, Cys154–Cys168, and Cys179–Cys203. His47 functions as the Charge relay system in the catalytic mechanism. Positions 59 and 69 each coordinate Ca(2+). Asp91 functions as the Charge relay system in the catalytic mechanism. Ser183 serves as the catalytic Charge relay system.

The protein belongs to the peptidase S1 family. It depends on Ca(2+) as a cofactor.

Its subcellular location is the secreted. The protein resides in the extracellular space. It catalyses the reaction Preferential cleavage: Arg-|-Xaa, Lys-|-Xaa.. This chain is Trypsin, found in Squalus acanthias (Spiny dogfish).